The sequence spans 1068 residues: Target of Nesh-SH3 (1068 aa).

Positions 1 to 21 (MLSSLGCLLLCGSITLALGNA) are cleaved as a signal peptide. N37 is a glycosylation site (N-linked (GlcNAc...) asparagine). Positions 116-214 (KPLQLVVGTL…KIFNHKTVVG (99 aa)) constitute a Fibronectin type-III 1 domain. Disordered stretches follow at residues 315-351 (SKTPEVEKISARPTTVTPETVPRSTKPTTSSALDVSE) and 384-811 (VFSS…SITD). Over residues 326–339 (RPTTVTPETVPRST) the composition is skewed to low complexity. A compositionally biased stretch (polar residues) spans 340 to 351 (KPTTSSALDVSE). Low complexity predominate over residues 447–462 (QPTTPAPQQTTSIPST). Residues 463-473 (PKRRPRPKPPR) are compositionally biased toward basic residues. Residues 482 to 499 (AGTITPKISKSPEPTWTT) are compositionally biased toward polar residues. Positions 532-544 (RAPPKPKTSPRPR) are enriched in pro residues. Residues 562 to 574 (PKTSPSPEVSYTT) show a composition bias toward polar residues. 2 stretches are compositionally biased toward low complexity: residues 603–631 (IPFIPMISPSPSQEELQTTLEETDQSTQE) and 737–750 (PPLRSTPRPTGTPL). The segment covering 802–811 (PDNSPCSITD) has biased composition (polar residues). Residues 833 to 926 (PPTNLTVVTV…NTVAFSTESA (94 aa)) form the Fibronectin type-III 2 domain.

Probably interacts with ABI3. In terms of tissue distribution, expressed in brain, heart, lung, liver, pancreas kidney and placenta.

The protein localises to the secreted. The sequence is that of Target of Nesh-SH3 from Homo sapiens (Human).